The sequence spans 57 residues: Large ribosomal subunit protein bL32 (57 aa).

Residues 1-38 (MAVQQNKPTRSKRGMRRSHDALTAVTSLSVDQTSGEKH) are disordered. Positions 24–33 (AVTSLSVDQT) are enriched in polar residues.

The protein belongs to the bacterial ribosomal protein bL32 family.

The sequence is that of Large ribosomal subunit protein bL32 from Enterobacter sp. (strain 638).